The primary structure comprises 241 residues: Leucyl/phenylalanyl-tRNA--protein transferase (241 aa).

This sequence belongs to the L/F-transferase family.

Its subcellular location is the cytoplasm. The enzyme catalyses N-terminal L-lysyl-[protein] + L-leucyl-tRNA(Leu) = N-terminal L-leucyl-L-lysyl-[protein] + tRNA(Leu) + H(+). The catalysed reaction is N-terminal L-arginyl-[protein] + L-leucyl-tRNA(Leu) = N-terminal L-leucyl-L-arginyl-[protein] + tRNA(Leu) + H(+). It catalyses the reaction L-phenylalanyl-tRNA(Phe) + an N-terminal L-alpha-aminoacyl-[protein] = an N-terminal L-phenylalanyl-L-alpha-aminoacyl-[protein] + tRNA(Phe). Functionally, functions in the N-end rule pathway of protein degradation where it conjugates Leu, Phe and, less efficiently, Met from aminoacyl-tRNAs to the N-termini of proteins containing an N-terminal arginine or lysine. In Neisseria meningitidis serogroup B (strain ATCC BAA-335 / MC58), this protein is Leucyl/phenylalanyl-tRNA--protein transferase.